The following is a 44-amino-acid chain: Antibacterial protein 2 homolog (44 aa).

It belongs to the staphylococcal hemolytic protein family.

The protein resides in the secreted. In terms of biological role, has hemolytic activity and also inhibits the growth of gonococci. In Staphylococcus haemolyticus (strain JCSC1435), this protein is Antibacterial protein 2 homolog.